A 265-amino-acid chain; its full sequence is tRNA pseudouridine synthase A (265 aa).

Aspartate 53 (nucleophile) is an active-site residue. Tyrosine 111 is a substrate binding site.

The protein belongs to the tRNA pseudouridine synthase TruA family. As to quaternary structure, homodimer.

The enzyme catalyses uridine(38/39/40) in tRNA = pseudouridine(38/39/40) in tRNA. Its function is as follows. Formation of pseudouridine at positions 38, 39 and 40 in the anticodon stem and loop of transfer RNAs. The chain is tRNA pseudouridine synthase A from Acinetobacter baumannii (strain ACICU).